The sequence spans 527 residues: Monooxygenase aurF (527 aa).

A signal peptide spans 1-19 (MPNPTVAIVGLGALGLVTL). A glycan (N-linked (GlcNAc...) asparagine) is linked at Asn-59.

It belongs to the FMO family. Might be part of an extracellular enzyme complex composed of GIP1, aurF, aurO and aurS. It depends on FAD as a cofactor.

The protein localises to the secreted. It localises to the extracellular space. Its pathway is pigment biosynthesis. Monooxygenase; part of the gene cluster that mediates the biosynthesis of aurofusarin, a red mycelium pigment which is acting as a mycotoxin. The first step is performed by the polyketide synthase which condenses one acetyl-CoA and 6 malonyl-CoA units to form the first intermediate, the cyclic heptaketide and yellow pigment YWA1. The C2 hydroxyl group in the pyrone ring of YWA1 is probably formed during ring closure by an aldol-type cyclization reaction. The dehydratase aurZ then acts as the first tailoring enzyme in the aurofusarin biosynthetic pathway by converting YWA1 to nor-rubrofusarin. Nor-rubrofusarin is then methylated to rubrofusarin by the O-methyltransferase aurJ. Rubrofusarin is then transported across the plasma membrane by the rubrofusarin-specific pump aurT for further enzymatic processing by the extracellular complex composed of GIP1, aurF, aurO and aurS to yield aurofusarin. This chain is Monooxygenase aurF, found in Gibberella zeae (strain ATCC MYA-4620 / CBS 123657 / FGSC 9075 / NRRL 31084 / PH-1) (Wheat head blight fungus).